Reading from the N-terminus, the 655-residue chain is Probable replication factor A 73 kDa subunit (655 aa).

The tract at residues 195–217 (NRAAAPEATRARAVPPPARRTAS) is disordered. Residues 196-207 (RAAAPEATRARA) are compositionally biased toward low complexity. A DNA-binding region (OB) is located at residues 236–326 (FKIHGMVSRK…TLRSDSIIEA (91 aa)). The C4-type zinc finger occupies 518–539 (CASEGCQKKLVGENGDYRCEKC).

This sequence belongs to the replication factor A protein 1 family. As to quaternary structure, component of the heterotrimeric canonical replication protein A complex (RPA).

Its subcellular location is the nucleus. Functionally, as part of the heterotrimeric replication protein A complex (RPA/RP-A), binds and stabilizes single-stranded DNA intermediates, that form during DNA replication or upon DNA stress. It prevents their reannealing and in parallel, recruits and activates different proteins and complexes involved in DNA metabolism. Thereby, it plays an essential role both in DNA replication and the cellular response to DNA damage. The polypeptide is Probable replication factor A 73 kDa subunit (Caenorhabditis elegans).